A 235-amino-acid chain; its full sequence is Sugar fermentation stimulation protein homolog (235 aa).

The protein belongs to the SfsA family.

The sequence is that of Sugar fermentation stimulation protein homolog from Serratia proteamaculans (strain 568).